A 357-amino-acid polypeptide reads, in one-letter code: UPF0283 membrane protein BMEI0952 (357 aa).

The interval 1–36 is disordered; the sequence is MSDKTPRKPTAFRLEQPARVSAASEQEEPRRPRAVK. Basic and acidic residues predominate over residues 27–36; it reads EEPRRPRAVK. The next 2 membrane-spanning stretches (helical) occupy residues 78-98 and 109-129; these read ILFG…TEDL and LGWT…AIIL.

This sequence belongs to the UPF0283 family.

It localises to the cell inner membrane. This is UPF0283 membrane protein BMEI0952 from Brucella melitensis biotype 1 (strain ATCC 23456 / CCUG 17765 / NCTC 10094 / 16M).